The sequence spans 591 residues: Aspartate--tRNA(Asp/Asn) ligase (591 aa).

Residue Glu-176 coordinates L-aspartate. The segment at 200 to 203 is aspartate; sequence QLFK. Arg-222 contacts L-aspartate. Residues 222–224 and Gln-231 contribute to the ATP site; that span reads RDE. His-450 provides a ligand contact to L-aspartate. Glu-484 serves as a coordination point for ATP. Residue Arg-491 participates in L-aspartate binding. Residue 536-539 coordinates ATP; it reads GLDR.

Belongs to the class-II aminoacyl-tRNA synthetase family. Type 1 subfamily. Homodimer.

It is found in the cytoplasm. It carries out the reaction tRNA(Asx) + L-aspartate + ATP = L-aspartyl-tRNA(Asx) + AMP + diphosphate. Aspartyl-tRNA synthetase with relaxed tRNA specificity since it is able to aspartylate not only its cognate tRNA(Asp) but also tRNA(Asn). Reaction proceeds in two steps: L-aspartate is first activated by ATP to form Asp-AMP and then transferred to the acceptor end of tRNA(Asp/Asn). The protein is Aspartate--tRNA(Asp/Asn) ligase of Bacillus cereus (strain G9842).